Here is a 465-residue protein sequence, read N- to C-terminus: Protein Loquacious (465 aa).

Residues 1-337 (MDQENFHGSS…DSICGELEGE (337 aa)) form a necessary for enhancing pre-miRNA processing by Dcr-1 region. Residues 1–379 (MDQENFHGSS…TLKNATGKKL (379 aa)) form a not required for interaction with Dcr-1 region. The interval 1–392 (MDQENFHGSS…QKTCLKNNKI (392 aa)) is important for homodimerization and interaction with Dcr-1. The sufficient for binding RNA stretch occupies residues 129–211 (NGLAMKTPVS…DKLIGAQLPE (83 aa)). The segment at 129-322 (NGLAMKTPVS…WMRLQETPID (194 aa)) is necessary for promoting preferential binding of Dcr-2 to the less stably base paired ends of siRNAs. The DRBM 1 domain occupies 135-206 (TPVSILQELL…ARALIDKLIG (72 aa)). Positions 209-249 (LPESPSSSAGPSVTGLTVAGSGGDGNANATGGGDASDKTVG) are enables simultaneous binding of both DRBM 1 and 2 domains to dsRNA. Residues 210 to 246 (PESPSSSAGPSVTGLTVAGSGGDGNANATGGGDASDK) are disordered. Positions 211 to 223 (ESPSSSAGPSVTG) are enriched in polar residues. A necessary and sufficient for enhancing processing of pre-miRNAs by Dcr-1 region spans residues 220–465 (SVTGLTVAGS…LEYLKIMTKK (246 aa)). Gly residues predominate over residues 228 to 242 (GSGGDGNANATGGGD). Positions 245-322 (DKTVGNPIGW…WMRLQETPID (78 aa)) are sufficient for binding RNA. The DRBM 2 domain maps to 250-318 (NPIGWLQEMC…AHRMWMRLQE (69 aa)). A necessary for binding pre-miRNA region spans residues 308–309 (AA). The interval 338–359 (PRSSENYYGELKDISVPTLTTQ) is required for binding to Dcr-2 and to fully enhance Dcr-2 mediated cleavage of 3' overhanging termini (3'ovr) and blunt termini (BLT) dsRNAs. However, this region is dispensable for binding the dsRNA substrates. Positions 340 to 465 (SSENYYGELK…LEYLKIMTKK (126 aa)) are necessary for interaction with Dcr-1. A sufficent for binding to Dcr-1 region spans residues 392–463 (IDYIKLLGEI…NALEYLKIMT (72 aa)). Residues 393 to 461 (DYIKLLGEIA…AQNALEYLKI (69 aa)) enclose the DRBM 3 domain.

In terms of assembly, homodimer. Interacts with dicer enzyme Dcr-1. As to quaternary structure, component of the miRNA-directed RNA-induced loading complex (miRLC), composed of at least Dcr-1, AGO1 and loqs isoform PB (loqs-PB), which processes pre-miRNAs and loads the resulting miRNAs into the Argonaute 1 (AGO1)-containing RNA-induced silencing complex (miRISC) to target the selective destruction of homologous RNAs. Interacts (via DRBM 3 domain) with dicer enzyme Dcr-1 (via helicase domain). Different regions of the Dcr-1-loqs-PB heterodimer collaborate to recognize, bind and position the pre-miRNA for Dcr-1 mediated cleavage. In the absence of miRNA substrates, the heterodimer favors a closed, catalytically incompetent, conformation, whereas binding of authentic pre-miRNA substrates stabilizes the relatively rare open, catalytically competent, conformation of the heterodimer. During substrate recognition, the Dcr-1 PAZ domain and pre-miRNA interact with the DRBM 1 domain of loqs-PB, which likely contributes to substrate recognition and stabilization. At the miRNA binding stage, the Dcr-1 DRBM domain and the loqs-PB DRBM domains then bind the pre-miRNA in tandem to form a tight 'belt' around the pre-miRNA stem, the pre-miRNA loop is docked in the loop-binding region formed by DUF283, DRBM and part of the helicase domain of Dcr-1, and the loqs-PB DRBM 1 and the wing domain of Dcr-1 act together to bind the 5' and 3' pre-miRNA termini within the PAZ and platform domains of Dcr-1. These interactions between the proteins and their pre-miRNA substrate stabilize a distorted form of the pre-miRNA and position the scissile phosphodiester bonds of the pre-miRNA at the RNase III catalytic cleavage sites of Dcr-1. Following Dcr-1 mediated cleavage, the miRNA duplex remains bound to loqs-PB DRBM 1, which dissociates from the Dcr-1 RNase III 1 domain but remains in contact with the PAZ and wing domains suggesting that the heterodimer presents the mature miRNA to AGO2 for loading into the RNA-induced silencing complex (miRISC). In terms of assembly, able to interact with dicer enzyme Dcr-1. However, the relevance of such an interaction is unclear in vivo and another report found that it did not interact with Dcr-1. Monomer. Interacts (via C-terminus) with dicer enzyme Dcr-2 (via N-terminus); interaction is required for RNAi activity in producing siRNAs from a subset of endo- and exo-dsRNAs, and in the alternative siRLC, the interaction enhances the binding preference of the protein for the thermodynamically more stable ends of endogenous siRNAs. Interaction with Dcr-2 is RNA independent, however the isoform must bind both dsRNA and Dcr-2 to enhance Dcr-2 cleavage activity. Does not interact with Dcr-1. In terms of tissue distribution, strong expression in males and females. Expression in ovaries is relatively weak. Strong expression in females and relatively weak expression in males. Strong expression in ovaries.

It is found in the cytoplasm. It localises to the cytosol. Its function is as follows. Double-stranded RNA-binding protein which can function in gene silencing by acting with Dcr-1 to enhance its ATP-independent processing of a specific subset of precursor micro-RNAs (pre-miRNAs) to mature miRNAs. Some reports found it was able to enhance the efficiency of pre-miRNA processing by Dcr-1, and can shift the cleavage site of Dcr-1 altering the length of the mature miRNAs produced by Dcr-1 alone. However, in contrast to isoform PB, it is not necessary or sufficient for enhancing miRNA biogenesis, and is not required for development or female germline stem cell (GSC) maintenance. Another report also found that it decreases binding of Dcr-1 to the miRNA substrate let-7. Double-stranded RNA-binding protein which functions in gene silencing by acting with Dcr-1 to enhance its ATP-independent processing of a specific subset of precursor micro-RNAs (pre-miRNAs) to mature miRNAs. Function is essential for development and female germline stem cell (GSC) maintenance. Functions in miRNA-mediated gene silencing by enhancing the binding affinity and specific pre-miRNA processing activity of Dcr-1, and as part of the loqs-PB-Dcr-1 complex, is involved in substrate discrimination, correctly positioning the pre-miRNA in the Dcr-1 catalytic center for cleavage, and miRNA loading into the Argonaute 1 (Ago1)-containing RNA-induced silencing complex (miRISC). Increases the binding affinity of Dcr-1 to pre-miRNAs, thereby increasing dicing efficiency and broadening the range of substrates that can be processed by the dicer. It may also confer the substrate specificity of Dcr-1 towards pre-miRNAs, as in its absence Dcr-1 displays siRNA-generating activity towards long dsRNA substrates. It can also shift the cleavage site of Dcr-1 for a small number of pre-miRNAs, changing the length of the mature miRNAs produced by Dcr-1 alone. Increases the range of pre-miRNAs that can be processed by Dcr-1, by enhancing the dicing of suboptimal hairpin substrates including ones with mismatches at the dicing site. This function may also promote the generation of novel miRNA genes as it appears to have an important role in processing evolutionarily young miRNA genes, suggesting that it may also enhance dicing of substrates that have not acquired hairpin features required for efficient miRNA processing. As newly emerged miRNAs can have deleterious or beneficial effects on fitness, this function is likely part of a regulatory system that prevents excessive emergence of active miRNA genes and thus keeps them within an optimal range. Also forms a RISC loading complex (miRLC) with Dcr-1 to mediate Ago1-loading of mature miRNAs into the RNA-induced silencing complex (miRISC). In female ovaries, required for Dcr-1 to generate the twenty-three nucleotide isomiR variant of miR-307a which is able to repress its targets Gk2 and tara. In terms of biological role, double-stranded RNA-binding protein which has an essential role in gene silencing (RNAi) by acting with Dcr-2 to enhance its ATP-dependent processing of a subset of endogenous (endo) and exogenous (exo) dsRNAs into short interfering RNAs (siRNAs). Functions in RNAi by increasing the initial binding affinity of Dcr-2 to certain dsRNA substrates, and in the absence of r2d2, may also function in siRNA loading into the Argonaute 2 (AGO2)-containing RNA-induced silencing complex (siRISC) and guide strand selection for target silencing by the siRISC. Promotes Dcr-2 cleavage of a subset of dsRNAs, including endo-dsRNAs derived from convergent transcription, inverted repeats and transposons. Also enables Dcr-2 to produce hairpin-derived endo-siRNAs in the presence of cellular inhibitory inorganic phosphate, likely by increasing the binding affinity of the enzyme to the hairpin dsRNAs allowing the dsRNA to displace phosphate bound to Dcr-2. According to many reports, the cleavage reaction mode of Dcr-2 changes according to the termini of the dsRNA substrate, with the enzyme displaying a preference for processing blunt termini (BLT), likely non-self dsRNAs, over dsRNAs with 2 nucleotides 3' overhanging (3'ovr) termini, which are typically the structure of endo-dsRNAs. According to many reports, interaction with Loqs-PD modifies the molecular recognition mechanisms of Dcr-2 towards sub-optimal 3'ovr dsRNA substrates and thus enables the dicer to cleave endo-dsRNA templates with diverse termini. However, according to another report, the mode of cleavage reaction is not affected by the presence or absence of loqs-PD. In the absence of r2d2, may also form an alternative RISC loading complex (siRLC) with Dcr-2 to mediate AGO2-loading of endo- and exo-siRNAs into the RNA-induced silencing complex (siRISC). Many reports suggest that loqs-PD and r2d2 function independently with dcr-2 in distinct siRNA pathways, and may even compete for binding to the enzyme. Loaded siRNAs serve as a guide to direct the siRISC to complementary RNAs to degrade them or prevent their translation. The siRLC plays an important role in the ATP-dependent asymmetry sensing of the duplex, and is therefore also responsible for the selection of the strand that ultimately acts as the guide siRNA for the siRISC. Thermodynamically asymmetric endo-siRNAs can be pre-oriented in the siRLC by the Loqs-PD and DCr-2 complex, which preferentially binds to the most thermodynamically stable strand prior to loading into the siRISC. Appears to be involved in promoting double-strand breaks (DSBs) following exposure to a low-dose/dose-rate (LDR) of ionizing radiation. This Drosophila melanogaster (Fruit fly) protein is Protein Loquacious.